Reading from the N-terminus, the 229-residue chain is MFLFFFCDLFWLRLLLCMYYCVSRLCFIVYFNCLMLIFDFLLFCLFDLYLFVGLCLFLLLWFMLFNLYSLILYYCITYLNLYLLFCIVFLLYIAFLFLFCFLCDFFLFNNLLVGDSFMDVFFIRFLLCFLECFSLLCRCLSTFLRLFCNLLSSHFLLLMFFDFFYFIFVFFFYGVFCYFILFIFVFCFCLLFYVFLYLLDLFAAILQLFIFCNMILQLIMDFLLFLLFV.

7 consecutive transmembrane segments (helical) span residues 24 to 44 (RLCFIVYFNCLMLIFDFLLFC), 45 to 65 (LFDLYLFVGLCLFLLLWFMLF), 83 to 103 (LLFCIVFLLYIAFLFLFCFLC), 117 to 137 (FMDVFFIRFLLCFLECFSLLC), 143 to 163 (FLRLFCNLLSSHFLLLMFFDF), 177 to 199 (CYFILFIFVFCFCLLFYVFLYLL), and 206 to 228 (LQLFIFCNMILQLIMDFLLFLLF).

This sequence belongs to the ATPase A chain family. As to quaternary structure, F-type ATPases have 2 components, CF(1) - the catalytic core - and CF(0) - the membrane proton channel. CF(1) has five subunits: alpha(3), beta(3), gamma(1), delta(1), epsilon(1). CF(0) has three main subunits: a, b and c.

The protein localises to the mitochondrion inner membrane. In terms of biological role, mitochondrial membrane ATP synthase (F(1)F(0) ATP synthase or Complex V) produces ATP from ADP in the presence of a proton gradient across the membrane which is generated by electron transport complexes of the respiratory chain. F-type ATPases consist of two structural domains, F(1) - containing the extramembraneous catalytic core and F(0) - containing the membrane proton channel, linked together by a central stalk and a peripheral stalk. During catalysis, ATP synthesis in the catalytic domain of F(1) is coupled via a rotary mechanism of the central stalk subunits to proton translocation. Key component of the proton channel; it may play a direct role in the translocation of protons across the membrane. The protein is ATP synthase subunit a (ATP6) of Trypanosoma brucei brucei.